The following is a 664-amino-acid chain: Protein-arginine deiminase type-3 (664 aa).

The protein belongs to the protein arginine deiminase family. It depends on Ca(2+) as a cofactor. Epidermis and hair follicles.

It localises to the cytoplasm. It catalyses the reaction L-arginyl-[protein] + H2O = L-citrullyl-[protein] + NH4(+). Functionally, catalyzes the deimination of arginine residues of proteins. This chain is Protein-arginine deiminase type-3 (Padi3), found in Rattus norvegicus (Rat).